A 250-amino-acid polypeptide reads, in one-letter code: 5'-nucleotidase SurE (250 aa).

D8, D9, S40, and N94 together coordinate a divalent metal cation.

It belongs to the SurE nucleotidase family. A divalent metal cation is required as a cofactor.

It localises to the cytoplasm. It catalyses the reaction a ribonucleoside 5'-phosphate + H2O = a ribonucleoside + phosphate. In terms of biological role, nucleotidase that shows phosphatase activity on nucleoside 5'-monophosphates. The sequence is that of 5'-nucleotidase SurE from Wolbachia sp. subsp. Brugia malayi (strain TRS).